A 486-amino-acid chain; its full sequence is tRNA (uracil-5-)-methyltransferase homolog B (486 aa).

Positions 305, 355, and 405 each coordinate S-adenosyl-L-methionine. Cysteine 433 (nucleophile) is an active-site residue. Catalysis depends on glutamate 479, which acts as the Proton acceptor.

Belongs to the class I-like SAM-binding methyltransferase superfamily. RNA M5U methyltransferase family.

It localises to the mitochondrion matrix. It catalyses the reaction uridine(54) in tRNA + S-adenosyl-L-methionine = 5-methyluridine(54) in tRNA + S-adenosyl-L-homocysteine + H(+). It carries out the reaction a uridine in 12S rRNA + S-adenosyl-L-methionine = a 5-methyluridine in 12S rRNA + S-adenosyl-L-homocysteine + H(+). Mitochondrial S-adenosyl-L-methionine-dependent methyltransferase that catalyzes the formation of 5-methyl-uridine in tRNAs and 12S rRNA. Catalyzes the methylation of uridine at position 54 (m5U54) in all tRNAs. Specifically methylates the uridine in position 429 of 12S rRNA (m5U429). Does not affect RNA stability or mitochondrial translation. This is tRNA (uracil-5-)-methyltransferase homolog B (TRMT2B) from Pongo abelii (Sumatran orangutan).